We begin with the raw amino-acid sequence, 404 residues long: Endophilin-B2 (404 aa).

At Met1 the chain carries N-acetylmethionine. Residues 1-27 (MDFNMKKLASDAGIFFTRAVQFTEEKF) are membrane-binding amphipathic helix. Ser10 carries the post-translational modification Phosphoserine. In terms of domain architecture, BAR spans 24–291 (EEKFGQAEKT…LGSSQGAIFP (268 aa)). The stretch at 209–239 (SASALWNDEVDKAEQELRAAQTEFDRQAEVT) forms a coiled coil. An SH3 domain is found at 344 to 404 (SGTRKARVLY…VPVTYLELLS (61 aa)). Ser404 carries the phosphoserine modification.

It belongs to the endophilin family. As to quaternary structure, homodimer, and heterodimer with SH3GLB1.

It localises to the cytoplasm. This Rattus norvegicus (Rat) protein is Endophilin-B2.